Consider the following 229-residue polypeptide: Large ribosomal subunit protein uL1 (229 aa).

Belongs to the universal ribosomal protein uL1 family. As to quaternary structure, part of the 50S ribosomal subunit.

In terms of biological role, binds directly to 23S rRNA. The L1 stalk is quite mobile in the ribosome, and is involved in E site tRNA release. Its function is as follows. Protein L1 is also a translational repressor protein, it controls the translation of the L11 operon by binding to its mRNA. The sequence is that of Large ribosomal subunit protein uL1 from Haemophilus influenzae (strain 86-028NP).